Reading from the N-terminus, the 757-residue chain is Receptor protein kinase-like protein At4g34220 (757 aa).

A signal peptide spans 1-26 (MTSNRSNLLFSLVLFHFLFVPTQLQA). LRR repeat units follow at residues 104 to 126 (YLRILDLSSNFFNGSLPDSVFNA), 128 to 150 (ELQSISLGSNNLSGDLPKSVNSV), 152 to 174 (NLQLLNLSANAFTGEIPLNISLL), 176 to 198 (NLTVVSLSKNTFSGDIPSGFEAA), 199 to 219 (QILDLSSNLLNGSLPKDLGGK), 220 to 242 (SLHYLNLSHNKVLGEISPNFAEK), and 245 to 267 (ANATVDLSFNNLTGPIPSSLSLL). The chain crosses the membrane as a helical span at residues 339–359 (IAAITVADIVGLAFIGLLVLY). The region spanning 471–753 (KASAYILGTT…KELVQVLEKI (283 aa)) is the Protein kinase domain. S473 carries the post-translational modification Phosphoserine. T494 carries the phosphothreonine modification. Phosphoserine is present on S553. The tract at residues 633 to 654 (ARESHTTGPTSSSPYQPPEWST) is disordered. T638 and T639 each carry phosphothreonine. The span at 638–654 (TTGPTSSSPYQPPEWST) shows a compositional bias: polar residues.

It belongs to the protein kinase superfamily.

Its subcellular location is the membrane. This chain is Receptor protein kinase-like protein At4g34220, found in Arabidopsis thaliana (Mouse-ear cress).